Consider the following 1366-residue polypeptide: Serine/threonine-protein kinase RUNKEL (1366 aa).

ATP is bound by residues 10 to 18 (IGHGKCSTV) and Lys-33. Catalysis depends on Asp-121, which acts as the Proton acceptor. 4 disordered regions span residues 276–356 (TKPC…VNIL), 367–386 (QKEN…NENC), 398–502 (LDFD…DSSK), and 524–549 (PSRK…FSKK). Over residues 283–302 (RNGDRPNKTPPKYREKDRKG) the composition is skewed to basic and acidic residues. The segment covering 304 to 313 (SKQNENSIQG) has biased composition (polar residues). Basic and acidic residues predominate over residues 367–376 (QKENEKENYR). Residues 398–414 (LDFDENNDDEGPDESEG) are compositionally biased toward acidic residues. Residues 422 to 433 (QEERVMSHNENH) are compositionally biased toward basic and acidic residues. The segment covering 438–454 (VVSSNVPDENSSANETP) has biased composition (polar residues). HEAT repeat units follow at residues 595–633 (LTNG…HSTS), 638–675 (LANS…YIST), 699–737 (QVSN…QGAY), 835–872 (TEEK…NSRR), 878–907 (FCNA…AFVN), 908–945 (VIAS…RAPV), 946–986 (KTNA…LVEA), 992–1018 (DDFR…NGEI), 1019–1057 (IIRE…LLTE), 1072–1111 (ISNS…IKIS), 1279–1316 (TNLP…YACK), and 1329–1366 (GHDV…RLPR).

It belongs to the protein kinase superfamily. Ser/Thr protein kinase family. In terms of assembly, binds to microtubules (MT). Expressed in proliferating tissues of seedlings, lateral roots, young rosette leaves, siliques, flowers, embryos and stems (including apical meristem).

Its subcellular location is the cytoplasm. It is found in the cytoskeleton. The protein resides in the phragmoplast. The protein localises to the spindle. It catalyses the reaction L-seryl-[protein] + ATP = O-phospho-L-seryl-[protein] + ADP + H(+). It carries out the reaction L-threonyl-[protein] + ATP = O-phospho-L-threonyl-[protein] + ADP + H(+). Its function is as follows. Essential protein that regulates phragmoplast microtubule organization during cell plate expansion in cytokinesis during cell division, both somatic and syncytial. Required for endosperm cellularisation. In pollen development, involved in cellularisation during microsporogenesis by regulating radial microtubules (MT) organization in microspore mother cells. Seems to not have kinase activity. This is Serine/threonine-protein kinase RUNKEL from Arabidopsis thaliana (Mouse-ear cress).